Here is a 502-residue protein sequence, read N- to C-terminus: Probable cytochrome P450 514A4 (502 aa).

The chain crosses the membrane as a helical span at residues Ile-4–Leu-24. Cys-448 provides a ligand contact to heme.

It belongs to the cytochrome P450 family. The cofactor is heme.

It localises to the membrane. The sequence is that of Probable cytochrome P450 514A4 (cyp514A4) from Dictyostelium discoideum (Social amoeba).